A 483-amino-acid polypeptide reads, in one-letter code: Ribulose bisphosphate carboxylase large chain (483 aa).

Positions 1–2 are excised as a propeptide; the sequence is MS. Substrate is bound by residues Asn123 and Thr173. Lys175 (proton acceptor) is an active-site residue. Substrate is bound at residue Lys177. Positions 201, 203, and 204 each coordinate Mg(2+). Residue Lys201 is modified to N6-carboxylysine. Phosphoserine is present on Ser208. His294 serves as the catalytic Proton acceptor. Residues Arg295 and His327 each contribute to the substrate site. Thr330 carries the phosphothreonine modification. Residue Ser379 coordinates substrate.

Belongs to the RuBisCO large chain family. Type I subfamily. Heterohexadecamer of 8 large chains and 8 small chains; disulfide-linked. The disulfide link is formed within the large subunit homodimers. Mg(2+) is required as a cofactor. Post-translationally, the disulfide bond which can form in the large chain dimeric partners within the hexadecamer appears to be associated with oxidative stress and protein turnover.

It is found in the plastid. Its subcellular location is the chloroplast. The enzyme catalyses 2 (2R)-3-phosphoglycerate + 2 H(+) = D-ribulose 1,5-bisphosphate + CO2 + H2O. It catalyses the reaction D-ribulose 1,5-bisphosphate + O2 = 2-phosphoglycolate + (2R)-3-phosphoglycerate + 2 H(+). Its function is as follows. RuBisCO catalyzes two reactions: the carboxylation of D-ribulose 1,5-bisphosphate, the primary event in carbon dioxide fixation, as well as the oxidative fragmentation of the pentose substrate in the photorespiration process. Both reactions occur simultaneously and in competition at the same active site. The polypeptide is Ribulose bisphosphate carboxylase large chain (Aethionema cordifolium (Lebanon stonecress)).